The following is a 299-amino-acid chain: Transcription factor BHLH148 (299 aa).

Residues Arg-90–Ser-127 form a disordered region. Residues Glu-102–Glu-111 are compositionally biased toward acidic residues. Residues Ser-127–Arg-140 form a basic motif; degenerate region. Positions Ser-127–Leu-176 constitute a bHLH domain. The segment at Glu-141–Leu-176 is helix-loop-helix motif. Positions Glu-273–Phe-299 are disordered. Positions Gly-288–Phe-299 are enriched in polar residues.

This sequence belongs to the bHLH protein family. As to quaternary structure, interacts with TIFY10A/JAZ6, TIFY10B/JAZ7, TIFY11A/JAZ9, TIFY11C/JAZ11, and TIFY11D/JAZ12.

Its subcellular location is the nucleus. Its function is as follows. May act on an initial response of jasmonate-regulated gene expression toward drought tolerance as part of a BHLH148-TIFY11D/JAZ12-COI1A complex. The sequence is that of Transcription factor BHLH148 from Oryza sativa subsp. japonica (Rice).